The chain runs to 471 residues: Anthocyanidin 3-O-glucosyltransferase (471 aa).

Residue His24 is the Proton acceptor of the active site. His24 provides a ligand contact to an anthocyanidin. Asp130 acts as the Charge relay in catalysis. Thr152 provides a ligand contact to UDP-alpha-D-glucose. His161 provides a ligand contact to an anthocyanidin. UDP-alpha-D-glucose contacts are provided by Ala352, Gln354, His369, Trp372, Ser374, and Glu377. An anthocyanidin is bound at residue Gly392. The UDP-alpha-D-glucose site is built by Asp393 and Gln394.

This sequence belongs to the UDP-glycosyltransferase family.

The enzyme catalyses an anthocyanidin + UDP-alpha-D-glucose + H(+) = an anthocyanidin 3-O-beta-D-glucoside + UDP. It functions in the pathway pigment biosynthesis; anthocyanin biosynthesis. In terms of biological role, in the presence of other necessary color factors, this glycosylation reaction allows the accumulation of anthocyanin pigments. This is Anthocyanidin 3-O-glucosyltransferase (BZ1) from Zea mays (Maize).